A 130-amino-acid chain; its full sequence is RNA silencing suppressor p14 (130 aa).

Its function is as follows. Acts as a suppressor of RNA-mediated gene silencing, also known as post-transcriptional gene silencing (PTGS), a mechanism of plant viral defense that limits the accumulation of viral RNAs. Binds to dsRNAs without size specificity. The protein is RNA silencing suppressor p14 of Pothos latent virus (isolate Pigeonpea/India) (PoLV).